Reading from the N-terminus, the 568-residue chain is Proline--tRNA ligase (568 aa).

It belongs to the class-II aminoacyl-tRNA synthetase family. ProS type 1 subfamily. In terms of assembly, homodimer.

It is found in the cytoplasm. The catalysed reaction is tRNA(Pro) + L-proline + ATP = L-prolyl-tRNA(Pro) + AMP + diphosphate. Catalyzes the attachment of proline to tRNA(Pro) in a two-step reaction: proline is first activated by ATP to form Pro-AMP and then transferred to the acceptor end of tRNA(Pro). As ProRS can inadvertently accommodate and process non-cognate amino acids such as alanine and cysteine, to avoid such errors it has two additional distinct editing activities against alanine. One activity is designated as 'pretransfer' editing and involves the tRNA(Pro)-independent hydrolysis of activated Ala-AMP. The other activity is designated 'posttransfer' editing and involves deacylation of mischarged Ala-tRNA(Pro). The misacylated Cys-tRNA(Pro) is not edited by ProRS. The sequence is that of Proline--tRNA ligase from Macrococcus caseolyticus (strain JCSC5402) (Macrococcoides caseolyticum).